The sequence spans 300 residues: Cytochrome b (300 aa).

Transmembrane regions (helical) follow at residues 28–48 (YGFL…LLAL), 72–94 (WCFR…LHIL), 107–127 (SWIS…YGYV), 168–187 (FFVF…FGIL), 223–243 (IPNK…LFLL), and 279–299 (IGCQ…YIIL). Heme b is bound by residues His-78 and His-92.

This sequence belongs to the cytochrome b family. As to quaternary structure, the main subunits of complex b-c1 are: cytochrome b, cytochrome c1 and the Rieske protein. The cofactor is heme b.

Its subcellular location is the mitochondrion inner membrane. Functionally, component of the ubiquinol-cytochrome c reductase complex (complex III or cytochrome b-c1 complex) that is part of the mitochondrial respiratory chain. The b-c1 complex mediates electron transfer from ubiquinol to cytochrome c. Contributes to the generation of a proton gradient across the mitochondrial membrane that is then used for ATP synthesis. The protein is Cytochrome b (MT-CYB) of Plasmodium gallinaceum.